Here is a 464-residue protein sequence, read N- to C-terminus: Soluble pyridine nucleotide transhydrogenase (464 aa).

An FAD-binding site is contributed by 35–44 (DSRRQVGGNC).

This sequence belongs to the class-I pyridine nucleotide-disulfide oxidoreductase family. It depends on FAD as a cofactor.

It is found in the cytoplasm. The catalysed reaction is NAD(+) + NADPH = NADH + NADP(+). Conversion of NADPH, generated by peripheral catabolic pathways, to NADH, which can enter the respiratory chain for energy generation. This is Soluble pyridine nucleotide transhydrogenase from Pseudomonas entomophila (strain L48).